A 177-amino-acid chain; its full sequence is MTTATTNPSTYPNAMAVARYVGISASKARRVIDLVRGKSVEEALDILRWAPQQASEPVAKVIASAAANAQNNEGLDPSTLVVATIHADEGPTAKRIRPRAQGRAFRIRKRTSHITVIVESRPSREGRRGGAGESAGGARARRAQGSKAAAAKKAPASSSTKAATTTEASEEAKGGSQ.

The interval 118-177 (VESRPSREGRRGGAGESAGGARARRAQGSKAAAAKKAPASSSTKAATTTEASEEAKGGSQ) is disordered. Positions 121 to 130 (RPSREGRRGG) are enriched in basic and acidic residues. Residues 145 to 167 (GSKAAAAKKAPASSSTKAATTTE) show a composition bias toward low complexity.

This sequence belongs to the universal ribosomal protein uL22 family. In terms of assembly, part of the 50S ribosomal subunit.

Its function is as follows. This protein binds specifically to 23S rRNA; its binding is stimulated by other ribosomal proteins, e.g. L4, L17, and L20. It is important during the early stages of 50S assembly. It makes multiple contacts with different domains of the 23S rRNA in the assembled 50S subunit and ribosome. In terms of biological role, the globular domain of the protein is located near the polypeptide exit tunnel on the outside of the subunit, while an extended beta-hairpin is found that lines the wall of the exit tunnel in the center of the 70S ribosome. The chain is Large ribosomal subunit protein uL22 from Mycobacterium sp. (strain JLS).